A 354-amino-acid chain; its full sequence is Glyceraldehyde-3-phosphate dehydrogenase (354 aa).

NAD(+)-binding positions include 11–12 (TI) and glycine 108. D-glyceraldehyde 3-phosphate is bound at residue 137–139 (SCN). The Nucleophile role is filled by cysteine 138. Arginine 166 serves as a coordination point for NAD(+). 192 to 193 (HG) is a D-glyceraldehyde 3-phosphate binding site. An NAD(+)-binding site is contributed by glutamine 299.

Belongs to the glyceraldehyde-3-phosphate dehydrogenase family. As to quaternary structure, homotetramer.

It localises to the cytoplasm. The catalysed reaction is D-glyceraldehyde 3-phosphate + phosphate + NADP(+) = (2R)-3-phospho-glyceroyl phosphate + NADPH + H(+). It catalyses the reaction D-glyceraldehyde 3-phosphate + phosphate + NAD(+) = (2R)-3-phospho-glyceroyl phosphate + NADH + H(+). The protein operates within carbohydrate degradation; glycolysis; pyruvate from D-glyceraldehyde 3-phosphate: step 1/5. In Haloarcula marismortui (strain ATCC 43049 / DSM 3752 / JCM 8966 / VKM B-1809) (Halobacterium marismortui), this protein is Glyceraldehyde-3-phosphate dehydrogenase.